We begin with the raw amino-acid sequence, 185 residues long: Pre-histone-like nucleoprotein (185 aa).

Residue Ser2 is modified to N-acetylserine; by host. The propeptide occupies 2-23; that stretch reads SILISPDNNTGWGLCSAGMYGG. Thr55 is modified (phosphothreonine; by host). Ser172 is subject to Phosphoserine; by host. A Nuclear localization signal motif is present at residues 175–185; the sequence is RVPVRSRPPRS.

The protein belongs to the adenoviridae histone-like nucleoprotein family. As to quaternary structure, interacts with the core-capsid bridging protein; this interaction bridges the virus core to the capsid. Interacts with host NPM1; this interaction might play a role in placing the pre-histone-like nucleoprotein on the viral DNA or regulating viral gene expression. Interacts with host HMGB1; this interaction inhibits host immune response. Post-translationally, cleaved near the N-terminus by the viral protease during virion maturation to form the mature protein.

The protein localises to the virion. It is found in the host nucleus. It localises to the host nucleolus. Its function is as follows. Plays a role in the inhibition of host immune response within the nucleus. Interacts with cellular nucleosomes and immobilizes the host immune danger signal HMGB1 on chromatin. In turn, prevents HMGB1 release out of the cell and thus decreases inflammation. Also plays a role in the wrapping and condensation of the viral DNA. May also promote viral genome import into the nucleus. This chain is Pre-histone-like nucleoprotein, found in Human adenovirus F serotype 40 (HAdV-40).